The sequence spans 140 residues: Large ribosomal subunit protein uL16 (140 aa).

Residues 1–24 form a disordered region; the sequence is MALAPARTKYRKSQKGSRAGNAKR.

It belongs to the universal ribosomal protein uL16 family. Part of the 50S ribosomal subunit.

In terms of biological role, binds 23S rRNA and is also seen to make contacts with the A and possibly P site tRNAs. This chain is Large ribosomal subunit protein uL16, found in Opitutus terrae (strain DSM 11246 / JCM 15787 / PB90-1).